Consider the following 506-residue polypeptide: ATP synthase subunit alpha (506 aa).

170–177 (GDRQTGKT) is an ATP binding site.

The protein belongs to the ATPase alpha/beta chains family. As to quaternary structure, F-type ATPases have 2 components, CF(1) - the catalytic core - and CF(0) - the membrane proton channel. CF(1) has five subunits: alpha(3), beta(3), gamma(1), delta(1), epsilon(1). CF(0) has four main subunits: a(1), b(1), b'(1) and c(9-12).

It localises to the cellular thylakoid membrane. It carries out the reaction ATP + H2O + 4 H(+)(in) = ADP + phosphate + 5 H(+)(out). Produces ATP from ADP in the presence of a proton gradient across the membrane. The alpha chain is a regulatory subunit. The polypeptide is ATP synthase subunit alpha (Synechococcus sp. (strain CC9311)).